The following is a 40-amino-acid chain: Plasma membrane ATPase proteolipid 1 (40 aa).

Positions 1–2 (MT) are excised as a propeptide. A helical membrane pass occupies residues 3–26 (LPGGVILVFILVGLACIAIIATII). Over 27–40 (YRKWQARQRGLQRF) the chain is Cytoplasmic.

Monomer and homodimer. Associated with the 100 kDa subunit of the plasma membrane H(+)-ATPase.

It is found in the cell membrane. In Saccharomyces cerevisiae (strain ATCC 204508 / S288c) (Baker's yeast), this protein is Plasma membrane ATPase proteolipid 1 (PMP1).